The sequence spans 62 residues: Large ribosomal subunit protein bL28 (62 aa).

It belongs to the bacterial ribosomal protein bL28 family.

This is Large ribosomal subunit protein bL28 from Staphylococcus haemolyticus (strain JCSC1435).